Here is a 291-residue protein sequence, read N- to C-terminus: Gamma-sarcoglycan (291 aa).

Over 1–37 the chain is Cytoplasmic; sequence MVREQYTTATEGICIERPENQYVYKIGIYGWRKRCLY. Residues 38–58 traverse the membrane as a helical; Signal-anchor for type II membrane protein segment; sequence LFVLLLLIILVVNLALTIWIL. Topologically, residues 59-291 are extracellular; it reads KVMWFSPAGM…TCQEHNHICL (233 aa). Asn110 carries an N-linked (GlcNAc...) asparagine glycan. Cystine bridges form between Cys265–Cys290 and Cys267–Cys283.

Belongs to the sarcoglycan beta/delta/gamma/zeta family. As to quaternary structure, interacts with the syntrophin SNTA1. Cross-link to form 2 major subcomplexes: one consisting of SGCB, SGCD and SGCG and the other consisting of SGCB and SGCD. The association between SGCB and SGCG is particularly strong while SGCA is loosely associated with the other sarcoglycans. Interacts with FLNC. As to expression, expressed in skeletal and heart muscle.

Its subcellular location is the cell membrane. It localises to the sarcolemma. It is found in the cytoplasm. The protein localises to the cytoskeleton. Its function is as follows. Component of the sarcoglycan complex, a subcomplex of the dystrophin-glycoprotein complex which forms a link between the F-actin cytoskeleton and the extracellular matrix. In Homo sapiens (Human), this protein is Gamma-sarcoglycan (SGCG).